We begin with the raw amino-acid sequence, 88 residues long: MAKGQSLQDPFLNALRCERIPVSIYLVNGIKLQGQIESFDQFVILLKNTVNQMVYKHAISTVVPARAVSHHTASDRPQGERPQETTEE.

Residues 9-68 form the Sm domain; sequence DPFLNALRCERIPVSIYLVNGIKLQGQIESFDQFVILLKNTVNQMVYKHAISTVVPARAV. The segment at 66–88 is disordered; sequence RAVSHHTASDRPQGERPQETTEE. The segment covering 72 to 88 has biased composition (basic and acidic residues); that stretch reads TASDRPQGERPQETTEE.

The protein belongs to the Hfq family. As to quaternary structure, homohexamer.

In terms of biological role, RNA chaperone that binds small regulatory RNA (sRNAs) and mRNAs to facilitate mRNA translational regulation in response to envelope stress, environmental stress and changes in metabolite concentrations. Also binds with high specificity to tRNAs. The sequence is that of RNA-binding protein Hfq from Aliivibrio salmonicida (strain LFI1238) (Vibrio salmonicida (strain LFI1238)).